The chain runs to 158 residues: Replication and maintenance protein (158 aa).

The protein is Replication and maintenance protein (repL) of Staphylococcus aureus.